The following is a 242-amino-acid chain: Probable transcriptional regulatory protein EUBREC_1961 (242 aa).

Belongs to the TACO1 family.

The protein resides in the cytoplasm. The sequence is that of Probable transcriptional regulatory protein EUBREC_1961 from Agathobacter rectalis (strain ATCC 33656 / DSM 3377 / JCM 17463 / KCTC 5835 / VPI 0990) (Eubacterium rectale).